The following is a 469-amino-acid chain: Protein translocase subunit SecY (469 aa).

Residues 1–20 (MSFIDSLATLGQYLPAVTKP) lie on the Cytoplasmic side of the membrane. Residues 21 to 47 (KEKPSLGQKLVWSLVAVIIYLIMASTP) form a helical membrane-spanning segment. Residues 48 to 59 (LYGITSASFFKN) are Extracellular-facing. An intramembrane region (helical) is located at residues 60 to 67 (LILEQIIF). The discontinuously helical transmembrane segment at 60–88 (LILEQIIFASTTGTLAQLGIGPIITAGLI) threads the bilayer. The stretch at 68 to 79 (ASTTGTLAQLGI) is an intramembrane region. The helical intramembrane region spans 80–88 (GPIITAGLI). Over 89–109 (MQILAGSKLISIDLNDPDDRV) the chain is Cytoplasmic. The chain crosses the membrane as a helical span at residues 110-131 (KFTEAQKGLAFIFILVESALFG). Residues 132–146 (YVLARTSTTINASIL) lie on the Extracellular side of the membrane. The chain crosses the membrane as a helical span at residues 147-171 (FIAGIVIAQLIVATYLILLLDELIQ). The Cytoplasmic portion of the chain corresponds to 172 to 178 (KGWGLGS). The chain crosses the membrane as a helical span at residues 179-197 (GVSLFILAGVMKIMFWDMF). The Extracellular portion of the chain corresponds to 198–240 (GIASVSSQNLPIGFFPALFTALASHSDVLNLIVNTSTKNLFQP). A helical membrane pass occupies residues 241-262 (DLVGLVTTIALIIITIYLTTMT). Residues 263–287 (IEIPVTSQKLRGIRRTIPLNFLYVS) are Cytoplasmic-facing. The helical transmembrane segment at 288–309 (SIPVIFVAVLGSDIQLFASLAS) threads the bilayer. At 310–347 (YVSPSASNILNTVSGVFFFPPPNSAIPHSIYAVVLDPL) the chain is on the extracellular side. Residues 348–367 (GALEYAVVFIVLSILFGILW) traverse the membrane as a helical segment. The Cytoplasmic segment spans residues 368–410 (VDVAGLDPATQAQQLVEAGIEIPGVRNNPKIIEGILARYIYPL). Residues 411-429 (AFFSSIIVGLIAVFATLLG) traverse the membrane as a helical segment. Residues 430-432 (AYG) lie on the Extracellular side of the membrane. The chain crosses the membrane as a helical span at residues 433–447 (TGIGILLAVTIAIQY). Residues 448–469 (YSLLAYERSLEMYPLLKRLIGE) lie on the Cytoplasmic side of the membrane.

This sequence belongs to the SecY/SEC61-alpha family. In terms of assembly, component of the Sec protein translocase complex. Heterotrimer consisting of alpha (SecY), beta (SecG) and gamma (SecE) subunits. The heterotrimers can form oligomers, although 1 heterotrimer is thought to be able to translocate proteins. Interacts with the ribosome. May interact with SecDF, and other proteins may be involved.

The protein localises to the cell membrane. Functionally, the central subunit of the protein translocation channel SecYEG. Consists of two halves formed by TMs 1-5 and 6-10. These two domains form a lateral gate at the front which open onto the bilayer between TMs 2 and 7, and are clamped together by SecE at the back. The channel is closed by both a pore ring composed of hydrophobic SecY resides and a short helix (helix 2A) on the extracellular side of the membrane which forms a plug. The plug probably moves laterally to allow the channel to open. The ring and the pore may move independently. This chain is Protein translocase subunit SecY, found in Saccharolobus solfataricus (strain ATCC 35092 / DSM 1617 / JCM 11322 / P2) (Sulfolobus solfataricus).